The following is a 234-amino-acid chain: 2-phospho-L-lactate guanylyltransferase (234 aa).

It belongs to the CofC family. As to quaternary structure, homodimer.

The enzyme catalyses (2S)-2-phospholactate + GTP + H(+) = (2S)-lactyl-2-diphospho-5'-guanosine + diphosphate. The protein operates within cofactor biosynthesis; coenzyme F420 biosynthesis. Its function is as follows. Guanylyltransferase that catalyzes the activation of (2S)-2-phospholactate (2-PL) as (2S)-lactyl-2-diphospho-5'-guanosine, via the condensation of 2-PL with GTP. It is involved in the biosynthesis of coenzyme F420, a hydride carrier cofactor. This is 2-phospho-L-lactate guanylyltransferase from Methanobrevibacter ruminantium (strain ATCC 35063 / DSM 1093 / JCM 13430 / OCM 146 / M1) (Methanobacterium ruminantium).